The chain runs to 205 residues: High frequency lysogenization protein HflD homolog (205 aa).

Belongs to the HflD family.

It localises to the cytoplasm. The protein resides in the cell inner membrane. This chain is High frequency lysogenization protein HflD homolog, found in Shewanella sp. (strain ANA-3).